The sequence spans 435 residues: Xylose isomerase (435 aa).

Residues H100 and D103 contribute to the active site. Positions 231, 267, 270, 295, 306, 308, and 338 each coordinate Mg(2+).

Belongs to the xylose isomerase family. In terms of assembly, homotetramer. Mg(2+) serves as cofactor.

The protein localises to the cytoplasm. It carries out the reaction alpha-D-xylose = alpha-D-xylulofuranose. In Brucella suis biovar 1 (strain 1330), this protein is Xylose isomerase.